A 283-amino-acid polypeptide reads, in one-letter code: Protein FAM170A (283 aa).

2 disordered regions span residues Met-1–His-54 and Gly-123–Pro-171. A compositionally biased stretch (polar residues) spans Ser-127–Ser-138. The span at Gly-142 to Ser-153 shows a compositional bias: basic and acidic residues. Position 170 is a phosphothreonine (Thr-170). The C2H2-type; degenerate zinc finger occupies Phe-181–Arg-205. The disordered stretch occupies residues Asn-223 to Ser-283. Acidic residues predominate over residues Ser-228 to Lys-246. At Ser-268 the chain carries Phosphoserine.

This sequence belongs to the FAM170 family.

Its subcellular location is the nucleus. Acts as a nuclear transcription factor that positively regulates the expression of heat shock genes. Binds to heat shock promoter elements (HSE). The sequence is that of Protein FAM170A (FAM170A) from Macaca fascicularis (Crab-eating macaque).